The following is a 607-amino-acid chain: UvrABC system protein C (607 aa).

A GIY-YIG domain is found at 16–94 (GRPGVYRMFD…IKEWRPPYNI (79 aa)). The 36-residue stretch at 203 to 238 (NALSDELNASMEKAAMALDFERAAELRDQVALLRRV) folds into the UVR domain.

The protein belongs to the UvrC family. In terms of assembly, interacts with UvrB in an incision complex.

Its subcellular location is the cytoplasm. Its function is as follows. The UvrABC repair system catalyzes the recognition and processing of DNA lesions. UvrC both incises the 5' and 3' sides of the lesion. The N-terminal half is responsible for the 3' incision and the C-terminal half is responsible for the 5' incision. This Pseudomonas syringae pv. tomato (strain ATCC BAA-871 / DC3000) protein is UvrABC system protein C.